Reading from the N-terminus, the 211-residue chain is N-(5'-phosphoribosyl)anthranilate isomerase (211 aa).

It belongs to the TrpF family.

The catalysed reaction is N-(5-phospho-beta-D-ribosyl)anthranilate = 1-(2-carboxyphenylamino)-1-deoxy-D-ribulose 5-phosphate. It functions in the pathway amino-acid biosynthesis; L-tryptophan biosynthesis; L-tryptophan from chorismate: step 3/5. This chain is N-(5'-phosphoribosyl)anthranilate isomerase, found in Zymomonas mobilis subsp. mobilis (strain ATCC 31821 / ZM4 / CP4).